We begin with the raw amino-acid sequence, 316 residues long: MSKKEQSLMTPYLQFNRSQWAALRDSVPMTLTEGEIARLKGINEDLSLEEVAEIYLPLSRLLNFYISSNLRRQAVLEQFLGTNGQRIPYIISIAGSVAVGKSTTARVLQALLSRWPEHRSVELITTDGFLHPNEVLKERGLMKKKGFPLSYDMHRLVKFVSDLKSGAPNVTAPVYSHLIYDRIPDGDKTVAQPDILILEGLNVLQSGMDYPHDPHHVFVSDFVDFSIYVDAPENLLQNWYINRFLKFREGAFTDPDSYFHNYAQLSEAEAVNVATALWNEINYVNLKENILPTRERASLILTKSENHAVDQVRLRK.

95 to 102 (GSVAVGKS) is an ATP binding site.

Belongs to the prokaryotic pantothenate kinase family.

It is found in the cytoplasm. The catalysed reaction is (R)-pantothenate + ATP = (R)-4'-phosphopantothenate + ADP + H(+). The protein operates within cofactor biosynthesis; coenzyme A biosynthesis; CoA from (R)-pantothenate: step 1/5. The chain is Pantothenate kinase from Enterobacter sp. (strain 638).